A 185-amino-acid polypeptide reads, in one-letter code: Peptide deformylase (185 aa).

The Fe cation site is built by C94 and H136. The active site involves E137. Residue H140 coordinates Fe cation.

It belongs to the polypeptide deformylase family. Requires Fe(2+) as cofactor.

It catalyses the reaction N-terminal N-formyl-L-methionyl-[peptide] + H2O = N-terminal L-methionyl-[peptide] + formate. Functionally, removes the formyl group from the N-terminal Met of newly synthesized proteins. Requires at least a dipeptide for an efficient rate of reaction. N-terminal L-methionine is a prerequisite for activity but the enzyme has broad specificity at other positions. This Chlorobium limicola (strain DSM 245 / NBRC 103803 / 6330) protein is Peptide deformylase.